The sequence spans 123 residues: Large ribosomal subunit protein bL17 (123 aa).

The protein belongs to the bacterial ribosomal protein bL17 family. As to quaternary structure, part of the 50S ribosomal subunit. Contacts protein L32.

This Mycoplasma genitalium (strain ATCC 33530 / DSM 19775 / NCTC 10195 / G37) (Mycoplasmoides genitalium) protein is Large ribosomal subunit protein bL17.